We begin with the raw amino-acid sequence, 419 residues long: Gamma-glutamyl phosphate reductase (419 aa).

It belongs to the gamma-glutamyl phosphate reductase family.

It is found in the cytoplasm. The catalysed reaction is L-glutamate 5-semialdehyde + phosphate + NADP(+) = L-glutamyl 5-phosphate + NADPH + H(+). It participates in amino-acid biosynthesis; L-proline biosynthesis; L-glutamate 5-semialdehyde from L-glutamate: step 2/2. Its function is as follows. Catalyzes the NADPH-dependent reduction of L-glutamate 5-phosphate into L-glutamate 5-semialdehyde and phosphate. The product spontaneously undergoes cyclization to form 1-pyrroline-5-carboxylate. The protein is Gamma-glutamyl phosphate reductase of Bordetella parapertussis (strain 12822 / ATCC BAA-587 / NCTC 13253).